Consider the following 96-residue polypeptide: MNLRPLHDRVIVKRLDNETKTASGIVIPDNAAEKPDQGEVLAIGPGKKDDKGNNIALDVKVGDRVLFGKYAGQGVKVDGQELLVMREEDIMAVVNK.

It belongs to the GroES chaperonin family. In terms of assembly, heptamer of 7 subunits arranged in a ring. Interacts with the chaperonin GroEL.

Its subcellular location is the cytoplasm. Together with the chaperonin GroEL, plays an essential role in assisting protein folding. The GroEL-GroES system forms a nano-cage that allows encapsulation of the non-native substrate proteins and provides a physical environment optimized to promote and accelerate protein folding. GroES binds to the apical surface of the GroEL ring, thereby capping the opening of the GroEL channel. This is Co-chaperonin GroES from Cupriavidus taiwanensis (strain DSM 17343 / BCRC 17206 / CCUG 44338 / CIP 107171 / LMG 19424 / R1) (Ralstonia taiwanensis (strain LMG 19424)).